We begin with the raw amino-acid sequence, 424 residues long: Serine--tRNA ligase (424 aa).

229–231 contributes to the L-serine binding site; the sequence is TAE. 260 to 262 is a binding site for ATP; it reads RRE. E283 provides a ligand contact to L-serine. 347-350 is an ATP binding site; sequence EVSS. S383 provides a ligand contact to L-serine.

The protein belongs to the class-II aminoacyl-tRNA synthetase family. Type-1 seryl-tRNA synthetase subfamily. As to quaternary structure, homodimer. The tRNA molecule binds across the dimer.

It localises to the cytoplasm. The catalysed reaction is tRNA(Ser) + L-serine + ATP = L-seryl-tRNA(Ser) + AMP + diphosphate + H(+). It catalyses the reaction tRNA(Sec) + L-serine + ATP = L-seryl-tRNA(Sec) + AMP + diphosphate + H(+). The protein operates within aminoacyl-tRNA biosynthesis; selenocysteinyl-tRNA(Sec) biosynthesis; L-seryl-tRNA(Sec) from L-serine and tRNA(Sec): step 1/1. Functionally, catalyzes the attachment of serine to tRNA(Ser). Is also able to aminoacylate tRNA(Sec) with serine, to form the misacylated tRNA L-seryl-tRNA(Sec), which will be further converted into selenocysteinyl-tRNA(Sec). In Roseiflexus sp. (strain RS-1), this protein is Serine--tRNA ligase.